The following is a 566-amino-acid chain: Multidrug and toxin extrusion protein 1 (566 aa).

Met1 carries the post-translational modification N-acetylmethionine. 13 consecutive transmembrane segments (helical) span residues Leu37 to Ile57, Ala72 to Ser92, Leu120 to Leu140, Leu152 to Leu172, Tyr176 to Val196, Ala216 to Trp236, Ser257 to Tyr276, Ser295 to Ala315, Ala336 to Cys356, Ile370 to Leu390, Ile409 to Val429, Leu437 to Ala457, and Gly543 to Ile563.

This sequence belongs to the multi antimicrobial extrusion (MATE) (TC 2.A.66.1) family. As to expression, highly expressed in kidney and placenta, moderately in stomach, colon, lung, spleen, skeletal muscle and prostate, and slightly in spleen. In the kidney, found in medulla and cortex, especially in the proximal convoluted and straight tubules. No expression was observed in heart, brain, small intestine and liver. Expressed in Sertoli cells in testis.

The protein localises to the cell membrane. Its subcellular location is the apical cell membrane. The catalysed reaction is thiamine(out) + H(+)(in) = thiamine(in) + H(+)(out). The enzyme catalyses estrone 3-sulfate(in) + H(+)(out) = estrone 3-sulfate(out) + H(+)(in). It carries out the reaction creatinine(in) + H(+)(out) = creatinine(out) + H(+)(in). It catalyses the reaction agmatine(in) + H(+)(out) = agmatine(out) + H(+)(in). In terms of biological role, multidrug efflux pump that functions as a H(+)/organic cation antiporter. Plays a physiological role in the excretion of cationic compounds including endogenous metabolites, drugs, toxins through the kidney and liver, into urine and bile respectively. Mediates the efflux of endogenous compounds such as creatinine, vitamin B1/thiamine, agmatine and estrone-3-sulfate. May also contribute to regulate the transport of cationic compounds in testis across the blood-testis-barrier. The chain is Multidrug and toxin extrusion protein 1 (Slc47a1) from Rattus norvegicus (Rat).